The primary structure comprises 281 residues: Pantothenate synthetase (281 aa).

30–37 (MGNLHAGH) is an ATP binding site. Histidine 37 serves as the catalytic Proton donor. A (R)-pantoate-binding site is contributed by glutamine 61. Glutamine 61 contributes to the beta-alanine binding site. ATP is bound at residue 149 to 152 (GRKD). A (R)-pantoate-binding site is contributed by glutamine 155. ATP-binding positions include valine 178 and 186–189 (MSSR).

Belongs to the pantothenate synthetase family. Homodimer.

The protein resides in the cytoplasm. It carries out the reaction (R)-pantoate + beta-alanine + ATP = (R)-pantothenate + AMP + diphosphate + H(+). The protein operates within cofactor biosynthesis; (R)-pantothenate biosynthesis; (R)-pantothenate from (R)-pantoate and beta-alanine: step 1/1. In terms of biological role, catalyzes the condensation of pantoate with beta-alanine in an ATP-dependent reaction via a pantoyl-adenylate intermediate. The polypeptide is Pantothenate synthetase (Shewanella amazonensis (strain ATCC BAA-1098 / SB2B)).